The sequence spans 486 residues: Cytosol aminopeptidase (486 aa).

Zn(2+) contacts are provided by lysine 249 and aspartate 254. Lysine 261 is an active-site residue. Zn(2+)-binding residues include aspartate 272, aspartate 331, and glutamate 333. Arginine 335 is a catalytic residue.

It belongs to the peptidase M17 family. In terms of assembly, homohexamer. Zn(2+) serves as cofactor.

The protein resides in the cytoplasm. The catalysed reaction is Release of an N-terminal amino acid, Xaa-|-Yaa-, in which Xaa is preferably Leu, but may be other amino acids including Pro although not Arg or Lys, and Yaa may be Pro. Amino acid amides and methyl esters are also readily hydrolyzed, but rates on arylamides are exceedingly low.. It catalyses the reaction Release of N-terminal proline from a peptide.. In terms of biological role, presumably involved in the processing and regular turnover of intracellular proteins. Catalyzes the removal of unsubstituted N-terminal amino acids from various peptides. The polypeptide is Cytosol aminopeptidase (Encephalitozoon cuniculi (strain GB-M1) (Microsporidian parasite)).